The primary structure comprises 785 residues: Putative lipase C4A8.10 (785 aa).

Disordered regions lie at residues 29–99 (HSAT…SSDF) and 115–140 (NTNA…VGTS). The segment covering 32-41 (TSSTTVPPTV) has biased composition (low complexity). Over residues 47-58 (TKKESGSIEDRA) the composition is skewed to basic and acidic residues. Polar residues predominate over residues 63-86 (MTISSGENISKQISENNSSTNPKH). Low complexity-rich tracts occupy residues 89–99 (SESSPLLSSDF) and 127–140 (GVSH…VGTS). Catalysis depends on S390, which acts as the Charge relay system.

It belongs to the putative lipase ROG1 family.

This Schizosaccharomyces pombe (strain 972 / ATCC 24843) (Fission yeast) protein is Putative lipase C4A8.10.